Here is a 113-residue protein sequence, read N- to C-terminus: Prefoldin subunit beta (113 aa).

The protein belongs to the prefoldin subunit beta family. As to quaternary structure, heterohexamer of two alpha and four beta subunits.

Its subcellular location is the cytoplasm. In terms of biological role, molecular chaperone capable of stabilizing a range of proteins. Seems to fulfill an ATP-independent, HSP70-like function in archaeal de novo protein folding. The polypeptide is Prefoldin subunit beta (Methanococcus maripaludis (strain C7 / ATCC BAA-1331)).